The sequence spans 698 residues: Endogenous retrovirus group K member 21 Env polyprotein (698 aa).

The tract at residues 1–25 (MHPSEMQRKAPPRRRRHRNRAPLTH) is disordered. Positions 1–88 (MHPSEMQRKA…ALMIVSMVVS (88 aa)) are cleaved as a signal peptide. Basic residues predominate over residues 10 to 20 (APPRRRRHRNR). Residues 89–631 (LPMPAGAAAA…NLNPVTWVKT (543 aa)) lie on the Extracellular side of the membrane. Asparagine 99, asparagine 127, asparagine 152, asparagine 273, asparagine 354, asparagine 371, and asparagine 460 each carry an N-linked (GlcNAc...) asparagine glycan. Residues 465 to 485 (FIFTLIAVIMGLIAVTAMAAV) form a fusion peptide region. N-linked (GlcNAc...) asparagine glycans are attached at residues asparagine 506, asparagine 553, asparagine 565, and asparagine 584. The helical transmembrane segment at 632–652 (IGSTTIINLILILVCLFCLLL) threads the bilayer. Residues 653–698 (VCRCTQQLRRDSDHRERAMMTMVVLSKRKGGNVGKSKRDQIVTVSV) are Cytoplasmic-facing.

Belongs to the beta type-B retroviral envelope protein family. HERV class-II K(HML-2) env subfamily. As to quaternary structure, the surface (SU) and transmembrane (TM) proteins form a heterodimer. SU and TM are attached by noncovalent interactions or by a labile interchain disulfide bond. In terms of processing, specific enzymatic cleavages in vivo yield the mature SU and TM proteins.

It is found in the cell membrane. Its subcellular location is the virion. In terms of biological role, retroviral envelope proteins mediate receptor recognition and membrane fusion during early infection. Endogenous envelope proteins may have kept, lost or modified their original function during evolution. This endogenous envelope protein has lost its original fusogenic properties. Its function is as follows. SU mediates receptor recognition. Functionally, TM anchors the envelope heterodimer to the viral membrane through one transmembrane domain. The other hydrophobic domain, called fusion peptide, mediates fusion of the viral membrane with the target cell membrane. The chain is Endogenous retrovirus group K member 21 Env polyprotein (ERVK-21) from Homo sapiens (Human).